The sequence spans 160 residues: Ribonuclease HI (160 aa).

In terms of domain architecture, RNase H type-1 spans 4-147; sequence TPNSVTLYTD…CDRLAVAAYQ (144 aa). Mg(2+) is bound by residues Asp-13, Glu-52, Asp-74, and Asp-139.

The protein belongs to the RNase H family. Monomer. Mg(2+) is required as a cofactor.

It is found in the cytoplasm. The catalysed reaction is Endonucleolytic cleavage to 5'-phosphomonoester.. Its function is as follows. Endonuclease that specifically degrades the RNA of RNA-DNA hybrids. The chain is Ribonuclease HI (rnhA) from Synechocystis sp. (strain ATCC 27184 / PCC 6803 / Kazusa).